Consider the following 182-residue polypeptide: Transcription termination/antitermination protein NusG (182 aa).

Residues Val-131–Val-163 enclose the KOW domain.

This sequence belongs to the NusG family.

In terms of biological role, participates in transcription elongation, termination and antitermination. The polypeptide is Transcription termination/antitermination protein NusG (Staphylococcus carnosus (strain TM300)).